The sequence spans 156 residues: Glycine cleavage system H protein 2, mitochondrial (156 aa).

Residues 1–23 (MACRLFWASRVASHLRISVAQRG) constitute a mitochondrion transit peptide. Positions 47 to 129 (KATFGITDHA…YEQGWIIKVE (83 aa)) constitute a Lipoyl-binding domain. K88 is subject to N6-lipoyllysine. Residue S131 is modified to Phosphoserine.

The protein belongs to the GcvH family. As to quaternary structure, the glycine cleavage system is composed of four proteins: P, T, L and H. Requires (R)-lipoate as cofactor.

It is found in the mitochondrion. Functionally, the glycine decarboxylase (GDC) or glycine cleavage system catalyzes the degradation of glycine. The H protein shuttles the methylamine group of glycine from the P protein to the T protein. The protein is Glycine cleavage system H protein 2, mitochondrial (GDH2) of Arabidopsis thaliana (Mouse-ear cress).